Reading from the N-terminus, the 574-residue chain is Protein misato (574 aa).

This sequence belongs to the misato family.

The protein resides in the mitochondrion. The polypeptide is Protein misato (mst) (Drosophila melanogaster (Fruit fly)).